Reading from the N-terminus, the 505-residue chain is Maturase K (505 aa).

It belongs to the intron maturase 2 family. MatK subfamily.

The protein resides in the plastid. The protein localises to the chloroplast. Usually encoded in the trnK tRNA gene intron. Probably assists in splicing its own and other chloroplast group II introns. The protein is Maturase K of Sciadopitys verticillata (Japanese umbrella-pine).